The chain runs to 291 residues: Formamidopyrimidine-DNA glycosylase (291 aa).

The active-site Schiff-base intermediate with DNA is the proline 2. Catalysis depends on glutamate 3, which acts as the Proton donor. Residue lysine 58 is the Proton donor; for beta-elimination activity of the active site. Histidine 104, arginine 127, and arginine 172 together coordinate DNA. Residues phenylalanine 257–arginine 291 form an FPG-type zinc finger. The active-site Proton donor; for delta-elimination activity is the arginine 281.

It belongs to the FPG family. In terms of assembly, monomer. Zn(2+) serves as cofactor.

It carries out the reaction Hydrolysis of DNA containing ring-opened 7-methylguanine residues, releasing 2,6-diamino-4-hydroxy-5-(N-methyl)formamidopyrimidine.. The catalysed reaction is 2'-deoxyribonucleotide-(2'-deoxyribose 5'-phosphate)-2'-deoxyribonucleotide-DNA = a 3'-end 2'-deoxyribonucleotide-(2,3-dehydro-2,3-deoxyribose 5'-phosphate)-DNA + a 5'-end 5'-phospho-2'-deoxyribonucleoside-DNA + H(+). Functionally, involved in base excision repair of DNA damaged by oxidation or by mutagenic agents. Acts as a DNA glycosylase that recognizes and removes damaged bases. Has a preference for oxidized purines, such as 7,8-dihydro-8-oxoguanine (8-oxoG). Has AP (apurinic/apyrimidinic) lyase activity and introduces nicks in the DNA strand. Cleaves the DNA backbone by beta-delta elimination to generate a single-strand break at the site of the removed base with both 3'- and 5'-phosphates. In Ralstonia pickettii (strain 12J), this protein is Formamidopyrimidine-DNA glycosylase.